The following is a 144-amino-acid chain: Probable nucleoside diphosphate kinase 5 (144 aa).

The ATP site is built by K3, F51, R79, T85, R99, and N109. H112 acts as the Pros-phosphohistidine intermediate in catalysis.

The protein belongs to the NDK family.

It carries out the reaction a 2'-deoxyribonucleoside 5'-diphosphate + ATP = a 2'-deoxyribonucleoside 5'-triphosphate + ADP. The catalysed reaction is a ribonucleoside 5'-diphosphate + ATP = a ribonucleoside 5'-triphosphate + ADP. Involved in the synthesis of nucleoside triphosphates other than ATP. The ATP gamma phosphate is transferred to the NDP beta phosphate via a ping-pong mechanism, using a phosphorylated active-site intermediate. The polypeptide is Probable nucleoside diphosphate kinase 5 (Arabidopsis thaliana (Mouse-ear cress)).